Here is a 119-residue protein sequence, read N- to C-terminus: Large ribosomal subunit protein bL20 (119 aa).

Belongs to the bacterial ribosomal protein bL20 family.

Binds directly to 23S ribosomal RNA and is necessary for the in vitro assembly process of the 50S ribosomal subunit. It is not involved in the protein synthesizing functions of that subunit. The polypeptide is Large ribosomal subunit protein bL20 (Rhodopseudomonas palustris (strain ATCC BAA-98 / CGA009)).